The chain runs to 291 residues: Pantothenate synthetase (291 aa).

30 to 37 (MGYLHVGH) contacts ATP. Histidine 37 functions as the Proton donor in the catalytic mechanism. Position 61 (glutamine 61) interacts with (R)-pantoate. Position 61 (glutamine 61) interacts with beta-alanine. 147–150 (GEKD) contacts ATP. Glutamine 153 contributes to the (R)-pantoate binding site. ATP-binding positions include valine 176 and 184 to 187 (CSSR).

This sequence belongs to the pantothenate synthetase family. In terms of assembly, homodimer.

It is found in the cytoplasm. It carries out the reaction (R)-pantoate + beta-alanine + ATP = (R)-pantothenate + AMP + diphosphate + H(+). It participates in cofactor biosynthesis; (R)-pantothenate biosynthesis; (R)-pantothenate from (R)-pantoate and beta-alanine: step 1/1. Catalyzes the condensation of pantoate with beta-alanine in an ATP-dependent reaction via a pantoyl-adenylate intermediate. In Sinorhizobium medicae (strain WSM419) (Ensifer medicae), this protein is Pantothenate synthetase.